We begin with the raw amino-acid sequence, 600 residues long: Elongation factor 4 (600 aa).

The 183-residue stretch at 4-186 folds into the tr-type G domain; it reads DTIRNFSIIA…EIVKKIPPPE (183 aa). Residues 16–21 and 133–136 each bind GTP; these read DHGKST and NKID.

Belongs to the TRAFAC class translation factor GTPase superfamily. Classic translation factor GTPase family. LepA subfamily.

It is found in the cell inner membrane. It catalyses the reaction GTP + H2O = GDP + phosphate + H(+). Required for accurate and efficient protein synthesis under certain stress conditions. May act as a fidelity factor of the translation reaction, by catalyzing a one-codon backward translocation of tRNAs on improperly translocated ribosomes. Back-translocation proceeds from a post-translocation (POST) complex to a pre-translocation (PRE) complex, thus giving elongation factor G a second chance to translocate the tRNAs correctly. Binds to ribosomes in a GTP-dependent manner. The sequence is that of Elongation factor 4 from Geobacter sulfurreducens (strain ATCC 51573 / DSM 12127 / PCA).